The primary structure comprises 433 residues: Adenylosuccinate synthetase (433 aa).

GTP contacts are provided by residues 11–17 (GDEGKGK) and 39–41 (GHT). Catalysis depends on aspartate 12, which acts as the Proton acceptor. Mg(2+)-binding residues include aspartate 12 and glycine 39. Residues 12–15 (DEGK), 37–40 (NAGH), threonine 134, arginine 148, asparagine 230, threonine 245, and arginine 309 each bind IMP. Residue histidine 40 is the Proton donor of the active site. Position 305–311 (305–311 (VTTGRKR)) interacts with substrate. Residues arginine 311, 337–339 (KLD), and 419–421 (GTG) each bind GTP.

The protein belongs to the adenylosuccinate synthetase family. In terms of assembly, homodimer. Mg(2+) serves as cofactor.

Its subcellular location is the cytoplasm. The enzyme catalyses IMP + L-aspartate + GTP = N(6)-(1,2-dicarboxyethyl)-AMP + GDP + phosphate + 2 H(+). It functions in the pathway purine metabolism; AMP biosynthesis via de novo pathway; AMP from IMP: step 1/2. Its function is as follows. Plays an important role in the de novo pathway and in the salvage pathway of purine nucleotide biosynthesis. Catalyzes the first committed step in the biosynthesis of AMP from IMP. The sequence is that of Adenylosuccinate synthetase from Saccharomyces cerevisiae (strain Lalvin EC1118 / Prise de mousse) (Baker's yeast).